Reading from the N-terminus, the 244-residue chain is Lipoprotein-releasing system ATP-binding protein LolD (244 aa).

The ABC transporter domain occupies isoleucine 19 to valine 244. Glycine 55 to serine 62 provides a ligand contact to ATP.

Belongs to the ABC transporter superfamily. Lipoprotein translocase (TC 3.A.1.125) family. The complex is composed of two ATP-binding proteins (LolD) and two transmembrane proteins (LolC and LolE).

The protein localises to the cell inner membrane. Its function is as follows. Part of the ABC transporter complex LolCDE involved in the translocation of mature outer membrane-directed lipoproteins, from the inner membrane to the periplasmic chaperone, LolA. Responsible for the formation of the LolA-lipoprotein complex in an ATP-dependent manner. In Xanthomonas oryzae pv. oryzae (strain MAFF 311018), this protein is Lipoprotein-releasing system ATP-binding protein LolD.